The following is a 226-amino-acid chain: Glyceraldehyde 3-phosphate phosphatase (226 aa).

The protein belongs to the HAD-like hydrolase superfamily. It depends on Mg(2+) as a cofactor.

Its function is as follows. Catalyzes the dephosphorylation of D,L-glyceraldehyde 3-phosphate in vitro. In Methanothermobacter thermautotrophicus (strain ATCC 29096 / DSM 1053 / JCM 10044 / NBRC 100330 / Delta H) (Methanobacterium thermoautotrophicum), this protein is Glyceraldehyde 3-phosphate phosphatase.